The primary structure comprises 552 residues: Glutamine--tRNA ligase (552 aa).

The 'HIGH' region signature appears at 34-44 (PEPNGYLHIGH). ATP-binding positions include 35–37 (EPN) and 41–47 (HIGHAKS). L-glutamine is bound by residues D67 and Y212. Residues T231, 261–262 (RL), and 269–271 (MSK) each bind ATP. Residues 268 to 272 (LMSKR) carry the 'KMSKS' region motif.

It belongs to the class-I aminoacyl-tRNA synthetase family. Monomer.

The protein localises to the cytoplasm. It catalyses the reaction tRNA(Gln) + L-glutamine + ATP = L-glutaminyl-tRNA(Gln) + AMP + diphosphate. The sequence is that of Glutamine--tRNA ligase from Hamiltonella defensa subsp. Acyrthosiphon pisum (strain 5AT).